The primary structure comprises 28 residues: Trypsin inhibitor 4 (28 aa).

Intrachain disulfides connect Cys2-Cys19, Cys9-Cys21, and Cys15-Cys27.

This sequence belongs to the protease inhibitor I7 (squash-type serine protease inhibitor) family.

The protein localises to the secreted. Functionally, inhibits trypsin. This Luffa aegyptiaca (Sponge gourd) protein is Trypsin inhibitor 4.